Here is a 289-residue protein sequence, read N- to C-terminus: Heme oxygenase 1, chloroplastic (289 aa).

The N-terminal 64 residues, 1-64 (MAPAAASLTA…SASSSRRMVV (64 aa)), are a transit peptide targeting the chloroplast. Residue H96 participates in heme b binding.

This sequence belongs to the heme oxygenase family.

The protein resides in the plastid. The protein localises to the chloroplast. It carries out the reaction heme b + 3 reduced [NADPH--hemoprotein reductase] + 3 O2 = biliverdin IXalpha + CO + Fe(2+) + 3 oxidized [NADPH--hemoprotein reductase] + 3 H2O + H(+). Catalyzes the opening of the heme ring to form the open-chain tetrapyrrole biliverdin IX with the release of iron and carbon monoxide (CO). Is a key enzyme in the synthesis of the chromophore of the phytochrome family of plant photoreceptors. Essential for photoperiod response and repression of flowering through cytochromes that inhibit flowering by affecting both HD1 and EHD1 flowering pathways. This is Heme oxygenase 1, chloroplastic (HO1) from Oryza sativa subsp. japonica (Rice).